The chain runs to 141 residues: Hemoglobin subunit alpha-D (141 aa).

Residues 1–141 (MLSADEKQLI…VSDVLAEKYR (141 aa)) enclose the Globin domain. His58 and His87 together coordinate heme b.

Belongs to the globin family. As to quaternary structure, heterotetramer of two alpha-D chains and two beta chains. As to expression, red blood cells.

Its function is as follows. Involved in oxygen transport from the lung to the various peripheral tissues. The chain is Hemoglobin subunit alpha-D (HBAD) from Phrynops hilarii (Snake-necked turtle).